Reading from the N-terminus, the 278-residue chain is SLAM family member 8 (278 aa).

Residues 1 to 20 (MWSLWSLLLFEALLPVVVVS) form the signal peptide. The Extracellular portion of the chain corresponds to 21–231 (VQVLSKVGDS…AASGKASYKD (211 aa)). 2 N-linked (GlcNAc...) asparagine glycosylation sites follow: N83 and N154. Positions 126-213 (PEVQVFTAAA…PVSWDMTTVT (88 aa)) constitute an Ig-like C2-type domain. A disulfide bridge connects residues C150 and C199. A helical membrane pass occupies residues 232–252 (VLLVVVPITLFLILAGLFGAW). The Cytoplasmic segment spans residues 253–278 (HHGLCSGKKKDACTDGVLPETENALV).

Its subcellular location is the membrane. May play a role in B-lineage commitment and/or modulation of signaling through the B-cell receptor. The polypeptide is SLAM family member 8 (Slamf8) (Mus musculus (Mouse)).